The primary structure comprises 293 residues: MKSTFLWTACVTPFNCNGDSIDYSSLQRLLTMQVKAENGVVLLGSTGESLSLTDSEKRTLVEFVCKLKLNTEIIIGVPGVNLYQTLEWLDFCKGMPIHGYLMTTPIYAKPGIMGQTLWFEKLLEKAHVPVMFYNIPSRAGINLHAETVRNLSSHEKFWAIKDSSGTVDTLAQYKKVAPNIEVFCGDDNMISDMAAYGAAGLVSVASNVWPYVAHEYVKKCLNGRNPQADIWQQACEALFIASNPIPTKALLHDIGLIEHQTVRLPLSTEDLPSVEKLRQVNKMILGWKELATL.

T46 serves as a coordination point for pyruvate. Residue Y133 is the Proton donor/acceptor of the active site. K161 functions as the Schiff-base intermediate with substrate in the catalytic mechanism. Residue V202 participates in pyruvate binding.

This sequence belongs to the DapA family. In terms of assembly, homotetramer; dimer of dimers.

Its subcellular location is the cytoplasm. The enzyme catalyses L-aspartate 4-semialdehyde + pyruvate = (2S,4S)-4-hydroxy-2,3,4,5-tetrahydrodipicolinate + H2O + H(+). It functions in the pathway amino-acid biosynthesis; L-lysine biosynthesis via DAP pathway; (S)-tetrahydrodipicolinate from L-aspartate: step 3/4. Catalyzes the condensation of (S)-aspartate-beta-semialdehyde [(S)-ASA] and pyruvate to 4-hydroxy-tetrahydrodipicolinate (HTPA). This Wolbachia pipientis wMel protein is 4-hydroxy-tetrahydrodipicolinate synthase.